A 468-amino-acid polypeptide reads, in one-letter code: Putative chitinase 1 (468 aa).

Positions 1–21 (MDFYSSLLPFLILIYLEFCSG) are cleaved as a signal peptide. A GH18 domain is found at 22–381 (FNRVCYYNGW…MSIIHGLGEY (360 aa)). Cys26 and Cys51 are joined by a disulfide. Chitin is bound by residues 73–74 (VF) and 100–103 (GGWD). The active-site Proton donor is Glu143. Residues Tyr144, 213–216 (KMYD), and Trp353 contribute to the chitin site. Residues 386 to 440 (SDTLEAEREMINKKIRKAAREISYYSDKGNSTMAKKMEDKLNQLKDHLSAVQAHQ) adopt a coiled-coil conformation.

This sequence belongs to the glycosyl hydrolase 18 family. In terms of tissue distribution, prismatic layer of shell (at protein level). Expressed primarily in the mantle with highest level in the outer epithelium of the mantle edge and lower level in the mantle pallium.

It localises to the secreted. It carries out the reaction Random endo-hydrolysis of N-acetyl-beta-D-glucosaminide (1-&gt;4)-beta-linkages in chitin and chitodextrins.. The polypeptide is Putative chitinase 1 (Margaritifera margaritifera (Freshwater pearl mussel)).